A 268-amino-acid chain; its full sequence is MAVNVYSTSVTSDNLSRHDMLAWINESLQLNLTKIEQLCSGAAYCQFMDMLFPGSIALKKVKFQAKLEHEYIQNFKILQAGFKRMGVDKIIPVDKLVKGKFQDNFEFVQWFKKFFDANYDGKDYDPVAARQGQETAVAPSLVAPALNKPKKPLSSSSAAPQRPISTQRTAAAPKAGPGVVRKNPGVGNGDDEAAELMQQVNVLKLTVEDLEKERDFYFGKLRNIELICQENEGENDPVLQRIVDILYATDEGFVIPDEGGPQEEQEEY.

Residue alanine 2 is modified to N-acetylalanine. Positions 14-116 constitute a Calponin-homology (CH) domain; the sequence is NLSRHDMLAW…FVQWFKKFFD (103 aa). Lysine 66 bears the N6-crotonyllysine mark. Tyrosine 124 carries the phosphotyrosine modification. The segment at 124–268 is interaction with MTUS2/TIP150; that stretch reads YDPVAARQGQ…GGPQEEQEEY (145 aa). The segment covering 146–160 has biased composition (low complexity); the sequence is LNKPKKPLSSSSAAP. The segment at 146–191 is disordered; sequence LNKPKKPLSSSSAAPQRPISTQRTAAAPKAGPGVVRKNPGVGNGDD. 2 positions are modified to phosphoserine: serine 155 and serine 165. The EB1 C-terminal domain occupies 185 to 255; that stretch reads GVGNGDDEAA…LYATDEGFVI (71 aa). Positions 185–268 are interaction with CDK5RAP2; that stretch reads GVGNGDDEAA…GGPQEEQEEY (84 aa). Residues 206–211 form an interaction with APC region; that stretch reads TVEDLE. Positions 208 to 268 are DCTN1-binding; sequence EDLEKERDFY…GGPQEEQEEY (61 aa). Lysine 220 carries the N6-acetyllysine modification. The interval 220-242 is APC-binding; sequence KLRNIELICQENEGENDPVLQRI. Residues 232–255 are interaction with SKA1; the sequence is EGENDPVLQRIVDILYATDEGFVI.

This sequence belongs to the MAPRE family. As to quaternary structure, homodimer. Heterodimer with MAPRE3. Interacts with DCTN1, DCTN2, TERF1 and dynein intermediate chain. Interaction with DIAPH1 and DIAPH2. Interacts (via C-terminal residues 206-211) with APC (via C-terminal residues 2674-2845); the interaction inhibits association with and bundling of F-actin. Interacts with CLASP2, DST, KIF2C and STIM1; probably required for their targeting to the growing microtubule plus ends. Interacts with MTUS2; interaction is direct and probably targets MTUS2 to microtubules. Interacts (via C-terminus) with SKA1 (via SXIP motif); the interaction is direct and stabilizes the kinetochore-microtubule attachment of the SKA1 complex. Interacts with APC2. Interacts with CLASP1. Interacts with CDK5RAP2. Interacts with MACF1. Interacts with RABL2/RABL2A; binds preferentially to GTP-bound RABL2. Interacts with KCNAB2. Interacts (via C-terminus) with CLIP1. Interacts with SLAIN2 and SLAIN1. Interacts with KIF18B; this interaction is required for efficient accumulation of KIF18B at microtubule plus ends. Interacts with MISP. Interacts with KNSTRN. Interacts with NCKAP5L. Interacts with CAMSAP2. Interacts with PDE4DIP isoform 13/MMG8/SMYLE; this interaction is required for its recruitment to the Golgi apparatus. Forms a pericentrosomal complex with AKAP9, CDK5RAP2 and PDE4DIP isoform 13/MMG8/SMYLE; within this complex, MAPRE1 binding to CDK5RAP2 may be mediated by PDE4DIP. Interacts with AKNA. Interacts with GAS2L1, GAS2L2, and GAS2L3. Interacts with RARRES1 and AGBL2. In terms of processing, acetylation at Lys-220 by KAT2B/PCAF promotes dynamic kinetochore-microtubule interactions in early mitosis. Crotonylated by KAT5 during mitosis, promoting astral microtubule plasticity and dynamic connection between astral microtubules and the cortex during mitotic chromosome segregation, thereby ensuring accurate spindle positioning in mitosis. Decrotonylated by HDAC3.

It localises to the cytoplasm. The protein resides in the cytoskeleton. Its subcellular location is the microtubule organizing center. The protein localises to the centrosome. It is found in the golgi apparatus. It localises to the spindle. The protein resides in the spindle pole. Its function is as follows. Plus-end tracking protein (+TIP) that binds to the plus-end of microtubules and regulates the dynamics of the microtubule cytoskeleton. Recruits other +TIP proteins to microtubules by binding to a conserved Ser-X-Leu-Pro (SXLP) motif in their polypeptide chains. Promotes cytoplasmic microtubule nucleation and elongation. Involved in mitotic spindle positioning by stabilizing microtubules and promoting dynamic connection between astral microtubules and the cortex during mitotic chromosome segregation. Assists chromosome alignment in metaphase by recruiting the SKA complex to the spindle and stabilizing its interactions with microtubule bundles (K-fibers). Also acts as a regulator of minus-end microtubule organization: interacts with the complex formed by AKAP9 and PDE4DIP, leading to recruit CAMSAP2 to the Golgi apparatus, thereby tethering non-centrosomal minus-end microtubules to the Golgi, an important step for polarized cell movement. Promotes elongation of CAMSAP2-decorated microtubule stretches on the minus-end of microtubules. Acts as a regulator of autophagosome transport via interaction with CAMSAP2. Functions downstream of Rho GTPases and DIAPH1 in stable microtubule formation. May play a role in cell migration. The sequence is that of Microtubule-associated protein RP/EB family member 1 (MAPRE1) from Pongo abelii (Sumatran orangutan).